A 336-amino-acid chain; its full sequence is Glyceraldehyde-3-phosphate dehydrogenase, chromosomal (336 aa).

Residues 12 to 13 (RI), Asp-37, Arg-81, and Ser-123 each bind NAD(+). D-glyceraldehyde 3-phosphate-binding positions include 154–156 (SCT) and Thr-185. Catalysis depends on Cys-155, which acts as the Nucleophile. An NAD(+)-binding site is contributed by Asn-186. D-glyceraldehyde 3-phosphate contacts are provided by residues Arg-200, 213–214 (TG), and Arg-236. Asn-317 lines the NAD(+) pocket.

It belongs to the glyceraldehyde-3-phosphate dehydrogenase family. As to quaternary structure, homotetramer.

The enzyme catalyses D-glyceraldehyde 3-phosphate + phosphate + NAD(+) = (2R)-3-phospho-glyceroyl phosphate + NADH + H(+). Its pathway is carbohydrate biosynthesis; Calvin cycle. Functionally, could be involved in carbon fixation as a component of the Calvin cycle. Catalyzes the oxidative phosphorylation of glyceraldehyde 3-phosphate (G3P) to 1,3-bisphosphoglycerate (BPG) using the cofactor NAD. The first reaction step involves the formation of a hemiacetal intermediate between G3P and a cysteine residue, and this hemiacetal intermediate is then oxidized to a thioester, with concomitant reduction of NAD to NADH. The reduced NADH is then exchanged with the second NAD, and the thioester is attacked by a nucleophilic inorganic phosphate to produce BPG. This Cupriavidus necator (strain ATCC 17699 / DSM 428 / KCTC 22496 / NCIMB 10442 / H16 / Stanier 337) (Ralstonia eutropha) protein is Glyceraldehyde-3-phosphate dehydrogenase, chromosomal (cbbGC).